Consider the following 64-residue polypeptide: Large ribosomal subunit protein bL35 (64 aa).

The span at 1 to 28 (MPKMKTKSGAAKRFKKTAGGLKHKHAFK) shows a compositional bias: basic residues. The disordered stretch occupies residues 1–64 (MPKMKTKSGA…ARVERSLRLR (64 aa)). Basic and acidic residues predominate over residues 53-64 (DVARVERSLRLR).

The protein belongs to the bacterial ribosomal protein bL35 family.

This is Large ribosomal subunit protein bL35 from Pseudomonas aeruginosa (strain LESB58).